Reading from the N-terminus, the 367-residue chain is Peptide chain release factor 2 (367 aa).

Gln251 is modified (N5-methylglutamine).

This sequence belongs to the prokaryotic/mitochondrial release factor family. Post-translationally, methylated by PrmC. Methylation increases the termination efficiency of RF2.

The protein localises to the cytoplasm. In terms of biological role, peptide chain release factor 2 directs the termination of translation in response to the peptide chain termination codons UGA and UAA. The protein is Peptide chain release factor 2 of Nautilia profundicola (strain ATCC BAA-1463 / DSM 18972 / AmH).